Consider the following 360-residue polypeptide: UDP-N-acetylglucosamine--N-acetylmuramyl-(pentapeptide) pyrophosphoryl-undecaprenol N-acetylglucosamine transferase (360 aa).

Residues S198 and Q289 each coordinate UDP-N-acetyl-alpha-D-glucosamine.

Belongs to the glycosyltransferase 28 family. MurG subfamily.

It is found in the cell membrane. The enzyme catalyses Mur2Ac(oyl-L-Ala-gamma-D-Glu-L-Lys-D-Ala-D-Ala)-di-trans,octa-cis-undecaprenyl diphosphate + UDP-N-acetyl-alpha-D-glucosamine = beta-D-GlcNAc-(1-&gt;4)-Mur2Ac(oyl-L-Ala-gamma-D-Glu-L-Lys-D-Ala-D-Ala)-di-trans,octa-cis-undecaprenyl diphosphate + UDP + H(+). Its pathway is cell wall biogenesis; peptidoglycan biosynthesis. Cell wall formation. Catalyzes the transfer of a GlcNAc subunit on undecaprenyl-pyrophosphoryl-MurNAc-pentapeptide (lipid intermediate I) to form undecaprenyl-pyrophosphoryl-MurNAc-(pentapeptide)GlcNAc (lipid intermediate II). This chain is UDP-N-acetylglucosamine--N-acetylmuramyl-(pentapeptide) pyrophosphoryl-undecaprenol N-acetylglucosamine transferase, found in Streptococcus pyogenes serotype M3 (strain SSI-1).